An 82-amino-acid chain; its full sequence is Exodeoxyribonuclease 7 small subunit (82 aa).

Belongs to the XseB family. In terms of assembly, heterooligomer composed of large and small subunits.

The protein localises to the cytoplasm. The catalysed reaction is Exonucleolytic cleavage in either 5'- to 3'- or 3'- to 5'-direction to yield nucleoside 5'-phosphates.. Functionally, bidirectionally degrades single-stranded DNA into large acid-insoluble oligonucleotides, which are then degraded further into small acid-soluble oligonucleotides. In Mycobacterium avium (strain 104), this protein is Exodeoxyribonuclease 7 small subunit.